The chain runs to 104 residues: MVRKAFKMQLFEGQAKEYEKRHNELWPEMKEMIHEYGGSNYTIFLDEETNVLYGYIELEDEEKWDKTAETEICKKWWAFMADIMETNPDNSPVSVSLKNVFHLD.

Residue Tyr-18 participates in substrate binding. His-22 (proton donor) is an active-site residue. Substrate is bound by residues Tyr-41 and 76–77 (WW).

Belongs to the rhamnose mutarotase family. As to quaternary structure, homodimer.

The protein localises to the cytoplasm. The catalysed reaction is alpha-L-rhamnose = beta-L-rhamnose. Its pathway is carbohydrate metabolism; L-rhamnose metabolism. Functionally, involved in the anomeric conversion of L-rhamnose. The polypeptide is L-rhamnose mutarotase (Lachnoclostridium phytofermentans (strain ATCC 700394 / DSM 18823 / ISDg) (Clostridium phytofermentans)).